The primary structure comprises 241 residues: Large ribosomal subunit protein bL25 (241 aa).

The interval 214-241 is disordered; it reads LDAVKAGEEGSRAQQETEEASERADQGQ.

Belongs to the bacterial ribosomal protein bL25 family. CTC subfamily. In terms of assembly, part of the 50S ribosomal subunit; part of the 5S rRNA/L5/L18/L25 subcomplex. Contacts the 5S rRNA. Binds to the 5S rRNA independently of L5 and L18.

This is one of the proteins that binds to the 5S RNA in the ribosome where it forms part of the central protuberance. This chain is Large ribosomal subunit protein bL25, found in Deinococcus geothermalis (strain DSM 11300 / CIP 105573 / AG-3a).